The primary structure comprises 96 residues: Large ribosomal subunit protein bL25 (96 aa).

The protein belongs to the bacterial ribosomal protein bL25 family. As to quaternary structure, part of the 50S ribosomal subunit; part of the 5S rRNA/L5/L18/L25 subcomplex. Contacts the 5S rRNA. Binds to the 5S rRNA independently of L5 and L18.

In terms of biological role, this is one of the proteins that binds to the 5S RNA in the ribosome where it forms part of the central protuberance. This is Large ribosomal subunit protein bL25 from Francisella tularensis subsp. holarctica (strain FTNF002-00 / FTA).